The sequence spans 271 residues: Putative phosphoenolpyruvate synthase regulatory protein (271 aa).

Position 151 to 158 (151 to 158 (GVSRSGKT)) interacts with ADP.

Belongs to the pyruvate, phosphate/water dikinase regulatory protein family. PSRP subfamily.

The catalysed reaction is [pyruvate, water dikinase] + ADP = [pyruvate, water dikinase]-phosphate + AMP + H(+). The enzyme catalyses [pyruvate, water dikinase]-phosphate + phosphate + H(+) = [pyruvate, water dikinase] + diphosphate. Bifunctional serine/threonine kinase and phosphorylase involved in the regulation of the phosphoenolpyruvate synthase (PEPS) by catalyzing its phosphorylation/dephosphorylation. This Burkholderia thailandensis (strain ATCC 700388 / DSM 13276 / CCUG 48851 / CIP 106301 / E264) protein is Putative phosphoenolpyruvate synthase regulatory protein.